The chain runs to 520 residues: Catalase easC (520 aa).

His-71 is a catalytic residue. Position 361 (Tyr-361) interacts with heme.

Belongs to the catalase family. Heme is required as a cofactor.

It functions in the pathway alkaloid biosynthesis; ergot alkaloid biosynthesis. Functionally, catalase; part of the gene cluster that mediates the biosynthesis of fumiclavanine C, a fungal ergot alkaloid. DmaW catalyzes the first step of ergot alkaloid biosynthesis by condensing dimethylallyl diphosphate (DMAP) and tryptophan to form 4-dimethylallyl-L-tryptophan. The second step is catalyzed by the methyltransferase easF that methylates 4-dimethylallyl-L-tryptophan in the presence of S-adenosyl-L-methionine, resulting in the formation of 4-dimethylallyl-L-abrine. The catalase easC and the FAD-dependent oxidoreductase easE then transform 4-dimethylallyl-L-abrine to chanoclavine-I which is further oxidized by EasD in the presence of NAD(+), resulting in the formation of chanoclavine-I aldehyde. EasA reduces chanoclavine-I aldehyde to dihydrochanoclavine-I aldehyde that spontaneously dehydrates to form 6,8-dimethyl-6,7-didehydroergoline. EasG then catalyzes the reduction of 6,8-dimethyl-6,7-didehydroergoline to form festuclavine. Hydrolysis of festuclavine by easM then leads to the formation of fumigaclavine B which is in turn acetylated by easN to fumigaclavine A. Finally, easL catalyzes the conversion of fumigaclavine A into fumigaclavine C by attaching a dimethylallyl moiety to C-2 of the indole nucleus. The polypeptide is Catalase easC (Aspergillus fumigatus (strain ATCC MYA-4609 / CBS 101355 / FGSC A1100 / Af293) (Neosartorya fumigata)).